The following is a 101-amino-acid chain: ATP synthase subunit c (101 aa).

Helical transmembrane passes span 28 to 48 (SVVA…VGMG) and 72 to 92 (MFIA…IALI).

This sequence belongs to the ATPase C chain family. As to quaternary structure, F-type ATPases have 2 components, F(1) - the catalytic core - and F(0) - the membrane proton channel. F(1) has five subunits: alpha(3), beta(3), gamma(1), delta(1), epsilon(1). F(0) has three main subunits: a(1), b(2) and c(10-14). The alpha and beta chains form an alternating ring which encloses part of the gamma chain. F(1) is attached to F(0) by a central stalk formed by the gamma and epsilon chains, while a peripheral stalk is formed by the delta and b chains.

The protein resides in the cell inner membrane. F(1)F(0) ATP synthase produces ATP from ADP in the presence of a proton or sodium gradient. F-type ATPases consist of two structural domains, F(1) containing the extramembraneous catalytic core and F(0) containing the membrane proton channel, linked together by a central stalk and a peripheral stalk. During catalysis, ATP synthesis in the catalytic domain of F(1) is coupled via a rotary mechanism of the central stalk subunits to proton translocation. In terms of biological role, key component of the F(0) channel; it plays a direct role in translocation across the membrane. A homomeric c-ring of between 10-14 subunits forms the central stalk rotor element with the F(1) delta and epsilon subunits. The chain is ATP synthase subunit c from Sulfurovum sp. (strain NBC37-1).